The sequence spans 344 residues: MGKPGFSPRGGGGGGGGGGGGFRGRGGGGGGGGGGFGGGRGRGGGGDRGGRGGFGGGRGGGGRGGGGGGGRGAFGGRGGGGGRGGGGRGGGGRGGGGRGGGAGGFKGGKTVTIEPHRHEGVFIARGKEDALVTRNFVPGSEVYGEKRISVETNGEKIEYRVWNPFRSKLAAAVLGGVEQIHMPPGSKVLYLGAASGTTVSHVSDVVGPEGLVYAVEFSHRSGRDLINVAKKRTNIIPIIEDARHPHKYRMLVGMVDTIFADVAQPDQGRIVALNAQHFLKNGGHFVISIKASCIDSTAQPEAVFAAEVKKMQADKLKPQEQLTLEPYERDHAVVVGVYRPPPKQ.

The disordered stretch occupies residues 1–113 (MGKPGFSPRG…GFKGGKTVTI (113 aa)). The segment covering 8–107 (PRGGGGGGGG…RGGGAGGFKG (100 aa)) has biased composition (gly residues). Arg9, Arg23, Arg25, Arg40, Arg42, Arg48, Arg51, Arg58, Arg63, Arg71, Arg77, Arg83, Arg88, Arg93, and Arg98 each carry asymmetric dimethylarginine. S-adenosyl-L-methionine-binding positions include 197–198 (TT), 216–217 (EF), 241–242 (DA), and 261–264 (DVAQ).

Belongs to the methyltransferase superfamily. Fibrillarin family. In terms of assembly, component of box C/D small nucleolar ribonucleoprotein (snoRNP) particles. It is associated with the U3, U8 and U13 small nuclear RNAs. By homology to other fibrillarins, some or all of the N-terminal domain arginines are modified to asymmetric dimethylarginine (DMA).

Its subcellular location is the nucleus. The protein localises to the nucleolus. The enzyme catalyses L-glutaminyl-[histone H2A] + S-adenosyl-L-methionine = N(5)-methyl-L-glutaminyl-[histone H2A] + S-adenosyl-L-homocysteine + H(+). Functionally, S-adenosyl-L-methionine-dependent methyltransferase that has the ability to methylate both RNAs and proteins. Involved in pre-rRNA processing. Utilizes the methyl donor S-adenosyl-L-methionine to catalyze the site-specific 2'-hydroxyl methylation of ribose moieties in pre-ribosomal RNA. Site specificity is provided by a guide RNA that base pairs with the substrate. Methylation occurs at a characteristic distance from the sequence involved in base pairing with the guide RNA. Also acts as a protein methyltransferase by mediating methylation of 'Gln-105' of histone H2A (H2AQ105me), a modification that impairs binding of the FACT complex and is specifically present at 35S ribosomal DNA locus. This chain is rRNA 2'-O-methyltransferase fibrillarin, found in Drosophila melanogaster (Fruit fly).